Consider the following 340-residue polypeptide: Ketol-acid reductoisomerase (NADP(+)) (340 aa).

In terms of domain architecture, KARI N-terminal Rossmann spans 1-182 (MRVYYDRDCD…GGGRSGIIET (182 aa)). NADP(+) contacts are provided by residues 24–27 (YGSQ), R48, S51, S53, and 83–86 (DELQ). Residue H108 is part of the active site. G134 is a binding site for NADP(+). The region spanning 183 to 329 (NFREECETDL…KELRGMMPWI (147 aa)) is the KARI C-terminal knotted domain. Positions 191, 195, 227, and 231 each coordinate Mg(2+). S252 lines the substrate pocket.

It belongs to the ketol-acid reductoisomerase family. Mg(2+) serves as cofactor.

The enzyme catalyses (2R)-2,3-dihydroxy-3-methylbutanoate + NADP(+) = (2S)-2-acetolactate + NADPH + H(+). The catalysed reaction is (2R,3R)-2,3-dihydroxy-3-methylpentanoate + NADP(+) = (S)-2-ethyl-2-hydroxy-3-oxobutanoate + NADPH + H(+). Its pathway is amino-acid biosynthesis; L-isoleucine biosynthesis; L-isoleucine from 2-oxobutanoate: step 2/4. It functions in the pathway amino-acid biosynthesis; L-valine biosynthesis; L-valine from pyruvate: step 2/4. Its function is as follows. Involved in the biosynthesis of branched-chain amino acids (BCAA). Catalyzes an alkyl-migration followed by a ketol-acid reduction of (S)-2-acetolactate (S2AL) to yield (R)-2,3-dihydroxy-isovalerate. In the isomerase reaction, S2AL is rearranged via a Mg-dependent methyl migration to produce 3-hydroxy-3-methyl-2-ketobutyrate (HMKB). In the reductase reaction, this 2-ketoacid undergoes a metal-dependent reduction by NADPH to yield (R)-2,3-dihydroxy-isovalerate. The chain is Ketol-acid reductoisomerase (NADP(+)) from Dinoroseobacter shibae (strain DSM 16493 / NCIMB 14021 / DFL 12).